The following is a 214-amino-acid chain: Adenylate kinase (214 aa).

14–19 (GSGKGT) contributes to the ATP binding site. Residues 34-63 (SSGDLFRSAIKSATPLGSKAAEYINKGLLV) are NMP. AMP contacts are provided by residues serine 35, arginine 40, 61–63 (LLV), 89–92 (GFPR), and glutamine 96. The interval 130 to 163 (SRFICPACNYVYNQSQGFKECPTCHVALIRRSDD) is LID. Arginine 131 lines the ATP pocket. Residues cysteine 134 and cysteine 137 each contribute to the Zn(2+) site. Residue 140–141 (VY) participates in ATP binding. Positions 150 and 153 each coordinate Zn(2+). Residues arginine 160 and arginine 171 each contribute to the AMP site. Threonine 199 serves as a coordination point for ATP.

The protein belongs to the adenylate kinase family. In terms of assembly, monomer.

The protein resides in the cytoplasm. The catalysed reaction is AMP + ATP = 2 ADP. Its pathway is purine metabolism; AMP biosynthesis via salvage pathway; AMP from ADP: step 1/1. Catalyzes the reversible transfer of the terminal phosphate group between ATP and AMP. Plays an important role in cellular energy homeostasis and in adenine nucleotide metabolism. The protein is Adenylate kinase of Chlamydia caviae (strain ATCC VR-813 / DSM 19441 / 03DC25 / GPIC) (Chlamydophila caviae).